Consider the following 526-residue polypeptide: Rho guanine nucleotide exchange factor 3 (526 aa).

Residues 20 to 40 (ELPPASGPAKDAEEPSNKRVK) are disordered. Phosphoserine is present on residues S47 and S70. A DH domain is found at 122–304 (KRQEAIFELS…QGIVAEINTK (183 aa)). Residues 291–449 (INIIQGIVAE…WLNCIRQAKE (159 aa)) form the PH domain. Disordered regions lie at residues 464-502 (EGSF…TSEV) and 507-526 (EHME…ESNV). Polar residues predominate over residues 466-475 (SFLNPTTGSR).

As to quaternary structure, interacts with RHOA and RHOB.

The protein resides in the cytoplasm. Functionally, acts as a guanine nucleotide exchange factor (GEF) for RhoA and RhoB GTPases. This is Rho guanine nucleotide exchange factor 3 (ARHGEF3) from Macaca fascicularis (Crab-eating macaque).